Here is a 353-residue protein sequence, read N- to C-terminus: Very-long-chain 3-oxoacyl-CoA reductase (353 aa).

A helical transmembrane segment spans residues 33-53; that stretch reads AAWALIAAGGFFVISRALLFG. The NADP(+) site is built by Val78, Asp133, Asp141, Asn160, Tyr227, Lys231, Ile260, and Ser262. Tyr227 functions as the Proton donor in the catalytic mechanism. Lys231 (lowers pKa of active site Tyr) is an active-site residue.

It belongs to the short-chain dehydrogenases/reductases (SDR) family.

It is found in the endoplasmic reticulum membrane. It catalyses the reaction a very-long-chain (3R)-3-hydroxyacyl-CoA + NADP(+) = a very-long-chain 3-oxoacyl-CoA + NADPH + H(+). Its pathway is lipid metabolism; fatty acid biosynthesis. In terms of biological role, component of the microsomal membrane bound fatty acid elongation system, which produces the 26-carbon very long-chain fatty acids (VLCFA) from palmitate. Catalyzes the reduction of the 3-ketoacyl-CoA intermediate that is formed in each cycle of fatty acid elongation. VLCFAs serve as precursors for ceramide and sphingolipids. This Aspergillus terreus (strain NIH 2624 / FGSC A1156) protein is Very-long-chain 3-oxoacyl-CoA reductase.